The primary structure comprises 213 residues: General transcription factor 3C polypeptide 6 (213 aa).

The span at M1–E11 shows a compositional bias: basic and acidic residues. 2 disordered regions span residues M1 to E20 and S191 to P213. A2 carries the N-acetylalanine modification. S9 bears the Phosphoserine mark.

It belongs to the TFIIIC subunit 6 family. As to quaternary structure, part of the TFIIIC subcomplex TFIIIC2, consisting of six subunits, GTF3C1, GTF3C2, GTF3C3, GTF3C4, GTF3C5 and GTF3C6. Interacts with GTF3C4 and GTF3C5.

The protein localises to the nucleus. In terms of biological role, involved in RNA polymerase III-mediated transcription. Integral, tightly associated component of the DNA-binding TFIIIC2 subcomplex that directly binds tRNA and virus-associated RNA promoters. The chain is General transcription factor 3C polypeptide 6 (GTF3C6) from Homo sapiens (Human).